We begin with the raw amino-acid sequence, 155 residues long: Cyclic pyranopterin monophosphate synthase (155 aa).

Substrate contacts are provided by residues L75–H77 and M111–E112. D126 is a catalytic residue.

The protein belongs to the MoaC family. In terms of assembly, homohexamer; trimer of dimers.

The catalysed reaction is (8S)-3',8-cyclo-7,8-dihydroguanosine 5'-triphosphate = cyclic pyranopterin phosphate + diphosphate. It functions in the pathway cofactor biosynthesis; molybdopterin biosynthesis. In terms of biological role, catalyzes the conversion of (8S)-3',8-cyclo-7,8-dihydroguanosine 5'-triphosphate to cyclic pyranopterin monophosphate (cPMP). The protein is Cyclic pyranopterin monophosphate synthase of Corynebacterium efficiens (strain DSM 44549 / YS-314 / AJ 12310 / JCM 11189 / NBRC 100395).